The primary structure comprises 168 residues: Mediator of RNA polymerase II transcription subunit 7b (168 aa).

Positions 1–12 are enriched in pro residues; sequence MATATYPPPPPY. The segment at 1 to 33 is disordered; sequence MATATYPPPPPYYRLYKDFSENTDSAPEPPPPI. Coiled coils occupy residues 64-92 and 132-162; these read KDSN…ADVL and IMEL…KDAF.

Belongs to the Mediator complex subunit 7 family. In terms of assembly, component of the Mediator complex. Interacts with MEE14/CBP1.

It is found in the nucleus. Functionally, component of the Mediator complex, a coactivator involved in the regulated transcription of nearly all RNA polymerase II-dependent genes. Mediator functions as a bridge to convey information from gene-specific regulatory proteins to the basal RNA polymerase II transcription machinery. The Mediator complex, having a compact conformation in its free form, is recruited to promoters by direct interactions with regulatory proteins and serves for the assembly of a functional pre-initiation complex with RNA polymerase II and the general transcription factors. The chain is Mediator of RNA polymerase II transcription subunit 7b (MED7B) from Arabidopsis thaliana (Mouse-ear cress).